Consider the following 528-residue polypeptide: Nucleobase-ascorbate transporter 5 (528 aa).

The tract at residues 1-20 is disordered; the sequence is MSAPKSGGDPLPHPPKEQLP. 12 helical membrane passes run 35–55, 71–91, 93–113, 133–153, 159–179, 181–201, 219–239, 285–305, 367–387, 390–410, 418–438, and 460–479; these read AVLL…LIPS, LIQT…VFGT, LPAV…IMLS, TQGA…SGLW, FLSP…LYEL, FPGV…LILI, FAVI…TLGG, FAMM…FIAV, AGFM…ASIP, IIAA…LSLL, FRTL…PQYF, and MVNV…AYLL.

This sequence belongs to the nucleobase:cation symporter-2 (NCS2) (TC 2.A.40) family. As to expression, weakly expressed in the vasculature of developing leaves.

The protein localises to the membrane. The sequence is that of Nucleobase-ascorbate transporter 5 (NAT5) from Arabidopsis thaliana (Mouse-ear cress).